Reading from the N-terminus, the 175-residue chain is Protein FLOWERING LOCUS T (175 aa).

The protein belongs to the phosphatidylethanolamine-binding protein family. In terms of assembly, interacts with FD/BZIP14 and FDP/BZIP27. Interacts with FTIP1/MCTP1 in phloem companion cells. Interacts with NAKR1. In terms of tissue distribution, mostly localized in leaves vasculature.

Its subcellular location is the cytoplasm. The protein resides in the nucleus. It localises to the endoplasmic reticulum. Functionally, component of the mobile flower-promoting signal (floral stimulus or florigen). Promotes the transition from vegetative growth to flowering. Required for 'SEPALLATA3' (SEP3) and 'FRUITFULL' (FUL) accumulation in mature rosette leaves. Seems to acts in parallel with 'LEAFY' to induce flowering by regulating 'APETALA1'. Translated in leaves and then transported to the shoot apical meristem where it activates the transcription of several floral meristem identity genes. May play a role in both the autonomous and the long-day flowering pathways. This chain is Protein FLOWERING LOCUS T, found in Arabidopsis thaliana (Mouse-ear cress).